A 144-amino-acid chain; its full sequence is Superoxide dismutase [Mn] (144 aa).

Positions 1–22 (GYVNGLESAEETLAENRESGDF) are disordered. His42, Asp124, and His128 together coordinate Mn(2+).

This sequence belongs to the iron/manganese superoxide dismutase family. Mn(2+) serves as cofactor.

It catalyses the reaction 2 superoxide + 2 H(+) = H2O2 + O2. Its function is as follows. Destroys superoxide anion radicals which are normally produced within the cells and which are toxic to biological systems. The sequence is that of Superoxide dismutase [Mn] (sod) from Haloarcula hispanica.